Reading from the N-terminus, the 195-residue chain is Holliday junction branch migration complex subunit RuvA (195 aa).

A domain I region spans residues 1–66 (MNYLVFKVIY…LIIKDLYGFR (66 aa)). The tract at residues 67-141 (TYNERLLFID…KYINKVSEKN (75 aa)) is domain II. Residue Asn141 is a region of interest, flexible linker. The interval 141–195 (NPWAKELSIGLENLGYDKKDIEYAITKVKVDTQQNIDISEIIGCAIKEISLRHEN) is domain III.

It belongs to the RuvA family. As to quaternary structure, homotetramer. Forms an RuvA(8)-RuvB(12)-Holliday junction (HJ) complex. HJ DNA is sandwiched between 2 RuvA tetramers; dsDNA enters through RuvA and exits via RuvB. An RuvB hexamer assembles on each DNA strand where it exits the tetramer. Each RuvB hexamer is contacted by two RuvA subunits (via domain III) on 2 adjacent RuvB subunits; this complex drives branch migration. In the full resolvosome a probable DNA-RuvA(4)-RuvB(12)-RuvC(2) complex forms which resolves the HJ.

Its subcellular location is the cytoplasm. In terms of biological role, the RuvA-RuvB-RuvC complex processes Holliday junction (HJ) DNA during genetic recombination and DNA repair, while the RuvA-RuvB complex plays an important role in the rescue of blocked DNA replication forks via replication fork reversal (RFR). RuvA specifically binds to HJ cruciform DNA, conferring on it an open structure. The RuvB hexamer acts as an ATP-dependent pump, pulling dsDNA into and through the RuvAB complex. HJ branch migration allows RuvC to scan DNA until it finds its consensus sequence, where it cleaves and resolves the cruciform DNA. The chain is Holliday junction branch migration complex subunit RuvA from Ureaplasma urealyticum serovar 10 (strain ATCC 33699 / Western).